A 399-amino-acid chain; its full sequence is Phosphoglycerate kinase (399 aa).

Substrate is bound by residues 22–24 (DFN), arginine 38, 61–64 (HLGR), arginine 120, and arginine 153. Residues lysine 204, glutamate 326, and 352 to 355 (GGDT) each bind ATP.

The protein belongs to the phosphoglycerate kinase family. Monomer.

It is found in the cytoplasm. The enzyme catalyses (2R)-3-phosphoglycerate + ATP = (2R)-3-phospho-glyceroyl phosphate + ADP. Its pathway is carbohydrate degradation; glycolysis; pyruvate from D-glyceraldehyde 3-phosphate: step 2/5. This Citrifermentans bemidjiense (strain ATCC BAA-1014 / DSM 16622 / JCM 12645 / Bem) (Geobacter bemidjiensis) protein is Phosphoglycerate kinase.